The following is a 205-amino-acid chain: Nitrophorin-7 (205 aa).

The signal sequence occupies residues 1-20 (MELYTALLAVTILSPSSIVG). 2 disulfides stabilise this stretch: cysteine 25–cysteine 144 and cysteine 62–cysteine 193. A histamine-binding site is contributed by aspartate 52. The heme site is built by histidine 80 and asparagine 91. Aspartate 154 serves as a coordination point for histamine.

Belongs to the calycin superfamily. Nitrophorin family. As to quaternary structure, forms oligomers (at pH 5.5). It depends on heme b as a cofactor. Expressed in the endothelial cells of the salivary glands.

The protein localises to the secreted. It carries out the reaction 3 nitrite + 2 H(+) = 2 nitric oxide + nitrate + H2O. In terms of biological role, converts nitrite as the sole substrate to form nitric oxide gas (NO). NO(2-) serves both as an electron donor and as an electron acceptor. Binds to negatively charged cell surfaces of activated platelets; binds to L-a-phosphatidyl-L-serine (PS)-bearing phospholipid membranes. Once bound on an activated platelet, NP7 releases its stored nitric oxide gas (NO) into the victim's tissues while feeding, resulting in vasodilation and inhibition of platelet aggregation. Also acts as an anticoagulant by blocking coagulation-factor binding sites. Has antihistamine activity; binds histamine with high affinity. This is Nitrophorin-7 from Rhodnius prolixus (Triatomid bug).